Here is a 407-residue protein sequence, read N- to C-terminus: Glycolate oxidase iron-sulfur subunit (407 aa).

2 consecutive 4Fe-4S ferredoxin-type domains span residues 14 to 47 (RALE…ELDG) and 66 to 95 (LKTQ…HNLL). Residues Cys-25, Cys-28, Cys-31, Cys-35, Cys-75, Cys-78, Cys-81, and Cys-85 each coordinate [4Fe-4S] cluster.

In terms of assembly, the glycolate oxidase likely consists of three subunits, GlcD, GlcE and GlcF. The cofactor is [4Fe-4S] cluster.

The protein resides in the cell inner membrane. The enzyme catalyses glycolate + A = glyoxylate + AH2. It carries out the reaction (R)-lactate + A = pyruvate + AH2. Its activity is regulated as follows. In vitro the glycolate oxidase activity is inhibited by the sulfhydryl inhibitors CuSO4 and PCMB, by KCN, but not by the metal complexing agent EDTA. In terms of biological role, component of a complex that catalyzes the oxidation of glycolate to glyoxylate. Is required for E.coli to grow on glycolate as a sole source of carbon. Is also able to oxidize D-lactate ((R)-lactate) with a similar rate. Does not link directly to O(2), and 2,6-dichloroindophenol (DCIP) and phenazine methosulfate (PMS) can act as artificial electron acceptors in vitro, but the physiological molecule that functions as a primary electron acceptor during glycolate oxidation is unknown. In Escherichia coli (strain K12), this protein is Glycolate oxidase iron-sulfur subunit.